The sequence spans 124 residues: uncharacterized protein (124 aa).

A signal peptide spans 1 to 23 (MHKLLKLLSITLIGLSVATGVQA).

The protein belongs to the cytochrome b562 family.

This is an uncharacterized protein from Pasteurella multocida (strain Pm70).